Here is a 104-residue protein sequence, read N- to C-terminus: Large ribosomal subunit protein uL24 (104 aa).

The protein belongs to the universal ribosomal protein uL24 family. In terms of assembly, part of the 50S ribosomal subunit.

In terms of biological role, one of two assembly initiator proteins, it binds directly to the 5'-end of the 23S rRNA, where it nucleates assembly of the 50S subunit. One of the proteins that surrounds the polypeptide exit tunnel on the outside of the subunit. This Photobacterium profundum (strain SS9) protein is Large ribosomal subunit protein uL24.